We begin with the raw amino-acid sequence, 666 residues long: DNA ligase (666 aa).

NAD(+) is bound by residues 31–35, 80–81, and glutamate 110; these read DKEFD and SL. The N6-AMP-lysine intermediate role is filled by lysine 112. NAD(+)-binding residues include arginine 133, glutamate 170, lysine 285, and lysine 309. Positions 404, 407, 422, and 428 each coordinate Zn(2+). A BRCT domain is found at 588–666; sequence GYTDKLAGQS…SEDEFLKLIS (79 aa).

Belongs to the NAD-dependent DNA ligase family. LigA subfamily. Mg(2+) serves as cofactor. It depends on Mn(2+) as a cofactor.

The enzyme catalyses NAD(+) + (deoxyribonucleotide)n-3'-hydroxyl + 5'-phospho-(deoxyribonucleotide)m = (deoxyribonucleotide)n+m + AMP + beta-nicotinamide D-nucleotide.. Functionally, DNA ligase that catalyzes the formation of phosphodiester linkages between 5'-phosphoryl and 3'-hydroxyl groups in double-stranded DNA using NAD as a coenzyme and as the energy source for the reaction. It is essential for DNA replication and repair of damaged DNA. This chain is DNA ligase, found in Bacteroides thetaiotaomicron (strain ATCC 29148 / DSM 2079 / JCM 5827 / CCUG 10774 / NCTC 10582 / VPI-5482 / E50).